Consider the following 271-residue polypeptide: Shikimate dehydrogenase (NADP(+)) (271 aa).

Shikimate-binding positions include 15–17 (SKS) and Thr-62. The active-site Proton acceptor is Lys-66. Residue Glu-78 coordinates NADP(+). The shikimate site is built by Asn-87 and Asp-103. Residues 127–131 (GAGGA), 151–156 (NRTQAK), and Met-214 contribute to the NADP(+) site. Residue Tyr-216 coordinates shikimate. Residue Gly-238 coordinates NADP(+).

It belongs to the shikimate dehydrogenase family. As to quaternary structure, homodimer.

It carries out the reaction shikimate + NADP(+) = 3-dehydroshikimate + NADPH + H(+). It participates in metabolic intermediate biosynthesis; chorismate biosynthesis; chorismate from D-erythrose 4-phosphate and phosphoenolpyruvate: step 4/7. Its function is as follows. Involved in the biosynthesis of the chorismate, which leads to the biosynthesis of aromatic amino acids. Catalyzes the reversible NADPH linked reduction of 3-dehydroshikimate (DHSA) to yield shikimate (SA). This chain is Shikimate dehydrogenase (NADP(+)), found in Shewanella pealeana (strain ATCC 700345 / ANG-SQ1).